Consider the following 506-residue polypeptide: Probable cytochrome P450 309a1 (506 aa).

Phosphothreonine is present on residues T75, T78, and T81. Residue C452 coordinates heme.

It belongs to the cytochrome P450 family. It depends on heme as a cofactor.

Its subcellular location is the endoplasmic reticulum membrane. The protein resides in the microsome membrane. Its function is as follows. May be involved in the metabolism of insect hormones and in the breakdown of synthetic insecticides. The sequence is that of Probable cytochrome P450 309a1 (Cyp309a1) from Drosophila melanogaster (Fruit fly).